A 139-amino-acid chain; its full sequence is Two-component response regulator 24 (139 aa).

A Response regulatory domain is found at Thr-19–Asn-134. Asp-69 is subject to 4-aspartylphosphate.

This sequence belongs to the ARR family. Type-A subfamily. Two-component system major event consists of a His-to-Asp phosphorelay between a sensor histidine kinase (HK) and a response regulator (RR). In plants, the His-to-Asp phosphorelay involves an additional intermediate named Histidine-containing phosphotransfer protein (HPt). This multistep phosphorelay consists of a His-Asp-His-Asp sequential transfer of a phosphate group between first a His and an Asp of the HK protein, followed by the transfer to a conserved His of the HPt protein and finally the transfer to an Asp in the receiver domain of the RR protein. Mostly expressed in flowers and siliques, primarily restricted to pollen grains.

The protein resides in the nucleus. Functionally, functions as a response regulator involved in His-to-Asp phosphorelay signal transduction system. Phosphorylation of the Asp residue in the receiver domain activates the ability of the protein to promote the transcription of target genes. Type-A response regulators seem to act as negative regulators of the cytokinin signaling. This Arabidopsis thaliana (Mouse-ear cress) protein is Two-component response regulator 24.